The primary structure comprises 158 residues: FUN14 domain-containing protein 1 (158 aa).

Residues 21-24 (YEVV) carry the YXXL motif. Helical transmembrane passes span 51–70 (YSVT…AGYL) and 77–98 (IAAT…SGYV).

The protein belongs to the FUN14 family.

It is found in the mitochondrion outer membrane. Functionally, acts as an activator of hypoxia-induced mitophagy, an important mechanism for mitochondrial quality control. In Tetraodon nigroviridis (Spotted green pufferfish), this protein is FUN14 domain-containing protein 1 (fundc1).